The sequence spans 184 residues: ADP-ribosylation factor-like protein 8c (184 aa).

Residues 1–18 (MGLWDSLLNWLRSLFFKQ) constitute an intramembrane region (note=Mediates targeting to membranes). GTP is bound by residues 29 to 34 (NAGKTS), 48 to 51 (MIPT), 70 to 74 (DLGGQ), and 129 to 132 (NKID).

The protein belongs to the small GTPase superfamily. Arf family. As to quaternary structure, interacts with tubulin.

The protein resides in the late endosome membrane. It is found in the lysosome membrane. The protein localises to the cytoplasm. It localises to the cytoskeleton. Its subcellular location is the spindle. Its function is as follows. May play a role in lysosome motility. May play a role in chromosome segregation. Functionally, (Microbial infection) Component of tomato mosaic virus (ToMV) RNA replication complexes. Required for tobamovirus multiplication, especially for efficient negative-strand RNA synthesis and viral RNA capping. The protein is ADP-ribosylation factor-like protein 8c of Arabidopsis thaliana (Mouse-ear cress).